The primary structure comprises 878 residues: Phosphoenolpyruvate carboxylase (878 aa).

Active-site residues include H140 and K545.

Belongs to the PEPCase type 1 family. Mg(2+) is required as a cofactor.

It carries out the reaction oxaloacetate + phosphate = phosphoenolpyruvate + hydrogencarbonate. Functionally, forms oxaloacetate, a four-carbon dicarboxylic acid source for the tricarboxylic acid cycle. The polypeptide is Phosphoenolpyruvate carboxylase (Pseudomonas paraeruginosa (strain DSM 24068 / PA7) (Pseudomonas aeruginosa (strain PA7))).